The following is a 293-amino-acid chain: Mimecan (293 aa).

An N-terminal signal peptide occupies residues 1-19 (MKTLQATFFLVAFVPLVKP). N-linked (GlcNAc...) asparagine glycosylation occurs at asparagine 60. 7 LRR repeats span residues 107–126 (EAVPPLPKETAYLYARFNKI), 127–150 (KRIAVSDFADITTLRRIDFSGNMI), 151–174 (EEIEDGAFSKLLLLEELSLAENRL), 175–194 (VKLPVLPPKLTTFNANQNRI), 195–220 (KSRGIKNNAFKKLTNLAYLYLGHNAL), 221–241 (ESVPLNLPESLRILHLQHNNI), and 242–272 (TTITDDTFCKSNNTRYIRTRMDEIRMEGNPI). 2 N-linked (GlcNAc...) asparagine glycosylation sites follow: asparagine 240 and asparagine 253. A disulfide bridge links cysteine 250 with cysteine 283.

This sequence belongs to the small leucine-rich proteoglycan (SLRP) family. SLRP class III subfamily. Contains keratan sulfate. Expressed in many tissues.

The protein localises to the secreted. The protein resides in the extracellular space. It localises to the extracellular matrix. Induces bone formation in conjunction with TGF-beta-1 or TGF-beta-2. This Coturnix japonica (Japanese quail) protein is Mimecan (OGN).